We begin with the raw amino-acid sequence, 851 residues long: Internalin J (851 aa).

The first 25 residues, 1-25, serve as a signal peptide directing secretion; sequence MKTTKIVIASLVSLTMVSNPLLTFA. 14 LRR repeats span residues 94 to 115, 116 to 136, 137 to 157, 158 to 179, 180 to 200, 201 to 221, 222 to 243, 244 to 263, 264 to 284, 285 to 306, 316 to 325, 338 to 357, 359 to 368, and 380 to 402; these read TLTS…EKLT, GLTK…SQNT, NLTY…TPLT, KLTY…QNPL, LTYL…HNTQ, LTEL…TPQT, QLTT…QNKL, LNRL…NQNI, QLTF…TPLT, QLTY…TLSK, DLLEIDLTHN, KIKE…DCQA, GITELDLSQN, and ELTE…NAHI. 4 MucBP domains span residues 506 to 568, 576 to 638, 647 to 709, and 717 to 779; these read PIKG…SQSV, IVAA…AQTV, APEK…SQTV, and IEAA…AQTV. The interval 786–825 is disordered; the sequence is NTNTDQPLPTKKPTNTTPTKPSNLKTTEVKKASDTLPKTG. A compositionally biased stretch (low complexity) spans 792 to 811; sequence PLPTKKPTNTTPTKPSNLKT. The LPXTG sorting signal signature appears at 821 to 825; it reads LPKTG. Thr-824 carries the post-translational modification Pentaglycyl murein peptidoglycan amidated threonine. Positions 825-851 are cleaved as a propeptide — removed by sortase A; that stretch reads GDSAPWKSALLGVFLSSTALVIWKKKK.

Belongs to the internalin family. As to quaternary structure, nearly full-length mature protein and an internal LRR-containing fragment interact in vitro with human intestinal mucin-2 (MUC2) but not with mucin-1. LRR fragment binding is slightly better at pH 5.5, (the pH of the intestine) than at pH 7.4.

It is found in the secreted. The protein localises to the cell wall. With respect to regulation, despite being transcribed during bacterial growth in culture the protein is only detected in infected mice. Functionally, involved in several steps of L.monocytogenes infection by both intravenous and oral infection. Probably acts as an adhesion; upon ectopic expression in L.innocula bacteria adhere better to human cell lines. The sequence is that of Internalin J (inlJ) from Listeria monocytogenes serovar 1/2a (strain ATCC BAA-679 / EGD-e).